Consider the following 174-residue polypeptide: MTTGVAVMSSATAASTATATAAATARIPLFLSRNNSSATVCSTLRCRTITRTRTRARLAICCEVALKSDSSTGFDSSSSSPPEEDEELKKNLEKVGCKVKVKSPLKVYHVPKLPEVELTPDMVGVIKQYVGFWKGKYISPNYPFKVEYRIDVPDRGSVKLVVHLKEEEFEIIAE.

The transit peptide at 1–62 directs the protein to the chloroplast; it reads MTTGVAVMSS…RTRARLAICC (62 aa). The span at 69–81 shows a compositional bias: low complexity; sequence DSSTGFDSSSSSP. The disordered stretch occupies residues 69-89; it reads DSSTGFDSSSSSPPEEDEELK. Residues serine 70 and serine 71 each carry the phosphoserine modification.

It belongs to the ferredoxin thioredoxin reductase alpha subunit family. Heterodimer of subunit A (variable subunit) and subunit B (catalytic subunit). Heterodimeric FTR forms a complex with ferredoxin and thioredoxin.

It localises to the plastid. The protein resides in the chloroplast. Variable subunit of the ferredoxin-thioredoxin reductase (FTR), which catalyzes the two-electron reduction of thioredoxins by the electrons provided by reduced ferredoxin. The protein is Ferredoxin-thioredoxin reductase, variable chain, chloroplastic (FTRV) of Spinacia oleracea (Spinach).